The sequence spans 136 residues: Histone H3.3 (136 aa).

The interval Met1 to Arg41 is disordered. Lys5 is subject to N6,N6,N6-trimethyllysine; alternate. Residue Lys5 is modified to N6,N6-dimethyllysine; alternate. An N6-methyllysine; alternate mark is found at Lys5 and Lys10. Lys10 carries the N6-acetyllysine; alternate modification. Ser11 carries the post-translational modification Phosphoserine. An N6,N6-dimethyllysine; alternate modification is found at Lys15. 5 positions are modified to N6-acetyllysine; alternate: Lys15, Lys19, Lys24, Lys28, and Lys37. N6-methyllysine; alternate occurs at positions 19, 24, 28, and 37. N6,N6,N6-trimethyllysine; alternate occurs at positions 28 and 37. Residues Lys28 and Lys37 each carry the N6,N6-dimethyllysine; alternate modification. Residues Lys57 and Lys65 each carry the N6-acetyllysine modification. The residue at position 80 (Lys80) is an N6,N6,N6-trimethyllysine; alternate. Lys80 bears the N6,N6-dimethyllysine; alternate mark. Lys80 is modified (N6-methyllysine; alternate).

The protein belongs to the histone H3 family. As to quaternary structure, the nucleosome is a histone octamer containing two molecules each of H2A, H2B, H3 and H4 assembled in one H3-H4 heterotetramer and two H2A-H2B heterodimers. The octamer wraps approximately 147 bp of DNA. Post-translationally, phosphorylated to form H3S10ph. H3S10ph promotes subsequent H3K14ac formation and is required for transcriptional activation through TBP recruitment to the promoters. In terms of processing, mono-, di- and trimethylated by the COMPASS complex to form H3K4me1/2/3. H3K4me activates gene expression by regulating transcription elongation and plays a role in telomere length maintenance. H3K4me enrichment correlates with transcription levels, and occurs in a 5' to 3' gradient with H3K4me3 enrichment at the 5'-end of genes, shifting to H3K4me2 and then H3K4me1. Methylated by SET2 to form H3K36me. H3K36me represses gene expression. Methylated by DOT1 to form H3K79me. H3K79me is required for association of SIR proteins with telomeric regions and for telomeric silencing. The COMPASS-mediated formation of H3K4me2/3 and the DOT1-mediated formation of H3K79me require H2BK123ub1. Acetylation of histone H3 leads to transcriptional activation. H3K14ac formation by GCN5 is promoted by H3S10ph. H3K14ac can also be formed by ESA1. H3K56ac formation occurs predominantly in newly synthesized H3 molecules during G1, S and G2/M of the cell cycle and may be involved in DNA repair.

It is found in the nucleus. It localises to the chromosome. In terms of biological role, core component of nucleosome. Nucleosomes wrap and compact DNA into chromatin, limiting DNA accessibility to the cellular machineries which require DNA as a template. Histones thereby play a central role in transcription regulation, DNA repair, DNA replication and chromosomal stability. DNA accessibility is regulated via a complex set of post-translational modifications of histones, also called histone code, and nucleosome remodeling. This Meyerozyma guilliermondii (strain ATCC 6260 / CBS 566 / DSM 6381 / JCM 1539 / NBRC 10279 / NRRL Y-324) (Yeast) protein is Histone H3.3 (HHT3).